Consider the following 234-residue polypeptide: 7-cyano-7-deazaguanine synthase (234 aa).

8 to 18 (FSGGQDSTTCA) serves as a coordination point for ATP. Positions 194, 202, 205, and 208 each coordinate Zn(2+).

It belongs to the QueC family. The cofactor is Zn(2+).

The enzyme catalyses 7-carboxy-7-deazaguanine + NH4(+) + ATP = 7-cyano-7-deazaguanine + ADP + phosphate + H2O + H(+). It participates in purine metabolism; 7-cyano-7-deazaguanine biosynthesis. In terms of biological role, catalyzes the ATP-dependent conversion of 7-carboxy-7-deazaguanine (CDG) to 7-cyano-7-deazaguanine (preQ(0)). The sequence is that of 7-cyano-7-deazaguanine synthase from Gloeobacter violaceus (strain ATCC 29082 / PCC 7421).